We begin with the raw amino-acid sequence, 204 residues long: Large ribosomal subunit protein uL4 (204 aa).

A disordered region spans residues 49-72; it reads QKNRAAVSGGGKKPWRQKGTGRAR.

This sequence belongs to the universal ribosomal protein uL4 family. In terms of assembly, part of the 50S ribosomal subunit.

In terms of biological role, one of the primary rRNA binding proteins, this protein initially binds near the 5'-end of the 23S rRNA. It is important during the early stages of 50S assembly. It makes multiple contacts with different domains of the 23S rRNA in the assembled 50S subunit and ribosome. Its function is as follows. Forms part of the polypeptide exit tunnel. In Saccharophagus degradans (strain 2-40 / ATCC 43961 / DSM 17024), this protein is Large ribosomal subunit protein uL4.